The following is a 551-amino-acid chain: Medium/long-chain-fatty-acid--CoA/3-oxocholest-4-en-26-oate--CoA ligase (551 aa).

Residues 172–180 (TGGTTGFPK), Asp417, Arg432, and Lys523 each bind ATP.

The protein belongs to the ATP-dependent AMP-binding enzyme family.

The enzyme catalyses a medium-chain fatty acid + ATP + CoA = a medium-chain fatty acyl-CoA + AMP + diphosphate. The catalysed reaction is a long-chain fatty acid + ATP + CoA = a long-chain fatty acyl-CoA + AMP + diphosphate. It carries out the reaction (25S)-3-oxocholest-4-en-26-oate + ATP + CoA = (25S)-3-oxocholest-4-en-26-oyl-CoA + AMP + diphosphate. It participates in lipid metabolism; fatty acid biosynthesis. It functions in the pathway steroid metabolism; cholesterol metabolism. Functionally, plays an essential role in degradation of the side chains of C-24 branched-chain sterols. Not essential for degradation of straight chain sterols such as cholesterol. Catalyzes the activation of medium/long-chain fatty acids as acyl-coenzyme A (acyl-CoA), which are then transferred to the multifunctional polyketide synthase (PKS) type III for further chain extension. May be involved in the degradation of cholesterol via the degradation of the side chains of C-24 branched-chain sterols. The chain is Medium/long-chain-fatty-acid--CoA/3-oxocholest-4-en-26-oate--CoA ligase from Mycolicibacterium smegmatis (strain ATCC 700084 / mc(2)155) (Mycobacterium smegmatis).